The sequence spans 379 residues: Protein hairy (379 aa).

The disordered stretch occupies residues 20–50 (STQQQQQQQQHKEAPIKSDRRSNKPIMEKRR). The span at 29 to 47 (QHKEAPIKSDRRSNKPIME) shows a compositional bias: basic and acidic residues. The interaction with Topors stretch occupies residues 36–55 (KSDRRSNKPIMEKRRRARIN). The region spanning 38-95 (DRRSNKPIMEKRRRARINNCLNELKTLILDATKKDPARHSKLEKADILEKTVKHLQEL) is the bHLH domain. An Orange domain is found at 114–143 (FKAGFADCANEVSRFPGLDSTQRRRLLQHL). Disordered regions lie at residues 167–208 (QSLH…NTTA) and 298–345 (QRTA…VKPS). Low complexity-rich tracts occupy residues 182-207 (PEQE…TNTT) and 301-328 (ASTG…GSYA). A WRPW motif motif is present at residues 376-379 (WRPW).

In terms of assembly, transcription repression requires formation of a complex with a corepressor protein (Groucho).

It is found in the nucleus. In terms of biological role, pair-rule protein that regulates embryonic segmentation and adult bristle patterning. Transcriptional repressor of genes that require a bHLH protein for their transcription (e.g. ftz). In Drosophila virilis (Fruit fly), this protein is Protein hairy.